A 128-amino-acid polypeptide reads, in one-letter code: uncharacterized protein (128 aa).

Residues 1–50 form a disordered region; sequence MSNEQGKGMGFFGNKGKPASEKKDEKKTKLDLDYKPDLNPSTPYDPTLPV. A compositionally biased stretch (basic and acidic residues) spans 18–36; sequence PASEKKDEKKTKLDLDYKP.

This is an uncharacterized protein from Bacillus anthracis.